The chain runs to 515 residues: MASGILVNVKEEVTCPICLELLTEPLSLPCGHSLCQACITANHKESMLYKEEERSCPVCRISYQPENIQPNRHVANIVEKLREVKLSPEEGQKVDHCARHGEKLLLFCQEDSKVICWLCERSQEHRGHHTFLMEEVAQEYHVKLQTALEMLRQKQQEAEKLEADIREEKASWKIQIDYDKTNVSADFEQLREILDWEESNELQNLEKEEEDILKSLTKSETEMVQQTQYMRELISDLEHRLQGSMMELLQGVDGIIKRVENMTLKKPKTFHKNQRRVFRAPDLKGMLDMFRELTDVRRYWVDVTLAPNNISHAVIAEDKRQVSYRNPQIMYQSPGSLFGSLTNFSYCTGVPGSQSITSGKLTNFNYCTGVLGSQSITSGKHYWEVDVSKKSAWILGVCAGFQPDATYNIEQNENYQPKYGYWVIGLQEGDKYSVFQDGSSHTPFAPFIVPLSVIICPDRVGVFVDYEACTVSFFNITNHGFLIYKFSQCSFSKPVFPYLNPRKCTVPMTLCSPSS.

Ala-2 carries the post-translational modification N-acetylalanine. An RING-type zinc finger spans residues 15–60 (CPICLELLTEPLSLPCGHSLCQACITANHKESMLYKEEERSCPVCR). Residue Ser-87 is modified to Phosphoserine. The B box-type zinc finger occupies 92–133 (QKVDHCARHGEKLLLFCQEDSKVICWLCERSQEHRGHHTFLM). Positions 97, 100, 119, and 125 each coordinate Zn(2+). Residues 137–225 (AQEYHVKLQT…LTKSETEMVQ (89 aa)) adopt a coiled-coil conformation. The required for interaction with GABARAP and for autophagy stretch occupies residues 187-200 (FEQLREILDWEESN). Residues 283–515 (LKGMLDMFRE…VPMTLCSPSS (233 aa)) enclose the B30.2/SPRY domain.

Belongs to the TRIM/RBCC family. As to quaternary structure, can form homodimers and homotrimers. In addition to lower-order dimerization, also exhibits a higher-order multimerization and both low- and high-order multimerizations are essential for its restriction activity. Interacts with BTBD1 and BTBD2. Interacts with PSMC4, PSMC5, PSMD7 and HSPA8/HSC70. Interacts (via B30.2/SPRY domain) with HSPA1A/B. Interacts with PSMC2, MAP3K7/TAK1, TAB2 and TAB3. Interacts with SQSTM1. Interacts with TRIM6 and TRIM34. Interacts with ULK1 (phosphorylated form), GABARAP, GABARAPL1, GABARAPL2, MAP1LC3A, MAP1LC3C and BECN1. Post-translationally, degraded in a proteasome-independent fashion in the absence of viral infection but in a proteasome-dependent fashion following exposure to restriction sensitive virus. Autoubiquitinated in a RING finger- and UBE2D2-dependent manner. Monoubiquitinated by TRIM21. Deubiquitinated by Yersinia YopJ. Ubiquitination may not lead to proteasomal degradation.

Its subcellular location is the cytoplasm. The protein localises to the nucleus. The enzyme catalyses S-ubiquitinyl-[E2 ubiquitin-conjugating enzyme]-L-cysteine + [acceptor protein]-L-lysine = [E2 ubiquitin-conjugating enzyme]-L-cysteine + N(6)-ubiquitinyl-[acceptor protein]-L-lysine.. It participates in protein modification; protein ubiquitination. Its function is as follows. Capsid-specific restriction factor that prevents infection from non-host-adapted retroviruses. Blocks viral replication early in the life cycle, after viral entry but before reverse transcription. In addition to acting as a capsid-specific restriction factor, also acts as a pattern recognition receptor that activates innate immune signaling in response to the retroviral capsid lattice. Binding to the viral capsid triggers its E3 ubiquitin ligase activity, and in concert with the heterodimeric ubiquitin conjugating enzyme complex UBE2V1-UBE2N (also known as UBC13-UEV1A complex) generates 'Lys-63'-linked polyubiquitin chains, which in turn are catalysts in the autophosphorylation of the MAP3K7/TAK1 complex (includes TAK1, TAB2, and TAB3). Activation of the MAP3K7/TAK1 complex by autophosphorylation results in the induction and expression of NF-kappa-B and MAPK-responsive inflammatory genes, thereby leading to an innate immune response in the infected cell. Restricts infection by human immunodeficiency virus type 1 (HIV-1) and N-tropic murine leukemia virus (N-MLV). Plays a role in regulating autophagy through activation of autophagy regulator BECN1 by causing its dissociation from its inhibitors BCL2 and TAB2. The protein is Tripartite motif-containing protein 5 (TRIM5) of Chlorocebus pygerythrus (Vervet monkey).